The sequence spans 788 residues: Serine/threonine-protein kinase MARK2 (788 aa).

The segment at 1–46 (MSSARTPLPTLNERDTEQPTLGHLDSKPSSKSNMIRGRNSATSADE) is disordered. The span at 27–45 (KPSSKSNMIRGRNSATSAD) shows a compositional bias: polar residues. Ser-40 is subject to Phosphoserine. A Protein kinase domain is found at 53–304 (YRLLKTIGKG…LEQIMKDRWM (252 aa)). Thr-58 carries the post-translational modification Phosphothreonine; by autocatalysis. Residues 59–67 (IGKGNFAKV) and Lys-82 contribute to the ATP site. Ser-91, Ser-92, and Ser-93 each carry phosphoserine; by CaMK1. Asp-175 (proton acceptor) is an active-site residue. Thr-208 is subject to Phosphothreonine; by LKB1 and TAOK1. Phosphoserine; by GSK3-beta is present on Ser-212. Position 274 is a phosphoserine; by autocatalysis (Ser-274). The residue at position 275 (Thr-275) is a Phosphothreonine; by autocatalysis. Phosphothreonine; by CaMK1 is present on Thr-294. Residues 323–362 (YKDPRRTELMVSMGYTREEIQDSLVGQRYNEVMATYLLLG) enclose the UBA domain. Residues 373–632 (ITLKPRPSAD…HSQGRRGASG (260 aa)) form a disordered region. Phosphoserine occurs at positions 376 and 409. Over residues 418–432 (PTSNSYSKKTQSNNA) the composition is skewed to polar residues. The segment covering 433–445 (ENKRPEEDRESGR) has biased composition (basic and acidic residues). Ser-456 carries the phosphoserine modification. Thr-467 carries the post-translational modification Phosphothreonine. Positions 467-486 (TPTPSTNSVLSTSTNRSRNS) are enriched in polar residues. Residues Ser-486 and Ser-493 each carry the phosphoserine modification. Over residues 495–504 (GQASIQNGKD) the composition is skewed to polar residues. The segment covering 511–525 (SRASTASASAAVSAA) has biased composition (low complexity). Ser-569, Ser-571, and Ser-592 each carry phosphoserine. Thr-596 bears the Phosphothreonine; by PKC/PRKCZ mark. A phosphoserine mark is found at Ser-619 and Ser-722. The KA1 domain occupies 739 to 788 (TPGHEDFVQWEMEVCKLPRLSLNGVRFKRISGTSMAFKNIASKIANELKL).

This sequence belongs to the protein kinase superfamily. CAMK Ser/Thr protein kinase family. SNF1 subfamily. As to quaternary structure, homodimer. Interacts with PAK5; leading to inhibit the protein kinase activity. Interacts with MAPT/TAU. Interacts with MTCL1 isoform 1; the interaction is direct and increases MARK2 microtubule-binding ability. Interacts (when phosphorylated at Thr-596) with YWHAZ. Interacts with YWHAB, YWHAG and YWHAQ. (Microbial infection) In case of infection, interacts with H.pylori CagA, leading to inhibit kinase activity and junctional and polarity defects. Mg(2+) is required as a cofactor. In terms of processing, autophosphorylated. Phosphorylated at Thr-208 by STK11/LKB1 in complex with STE20-related adapter-alpha (STRADA) pseudo kinase and CAB39. Phosphorylation at Thr-208 by TAOK1 activates the kinase activity, leading to phosphorylation and detachment of MAPT/TAU from microtubules. Phosphorylation at Ser-212 by GSK3-beta (GSK3B) inhibits the kinase activity. Phosphorylation by CaMK1 promotes activity and is required to promote neurite outgrowth. Phosphorylation at Thr-596 by PRKCZ/aPKC in polarized epithelial cells inhibits the kinase activity and promotes binding to 14-3-3 protein YWHAZ, leading to relocation from cell membrane to cytoplasm. High levels of expression in heart, brain, skeletal muscle and pancreas, lower levels observed in lung, liver and kidney.

Its subcellular location is the cell membrane. The protein localises to the cytoplasm. It is found in the lateral cell membrane. The protein resides in the cytoskeleton. It localises to the cell projection. Its subcellular location is the dendrite. It catalyses the reaction L-seryl-[protein] + ATP = O-phospho-L-seryl-[protein] + ADP + H(+). It carries out the reaction L-threonyl-[protein] + ATP = O-phospho-L-threonyl-[protein] + ADP + H(+). The catalysed reaction is L-seryl-[tau protein] + ATP = O-phospho-L-seryl-[tau protein] + ADP + H(+). The enzyme catalyses L-threonyl-[tau protein] + ATP = O-phospho-L-threonyl-[tau protein] + ADP + H(+). With respect to regulation, inhibited by PAK5; inhibition is independent of the kinase activity of PAK5. Activated by phosphorylation on Thr-208. Inhibited by phosphorylation at Ser-212 and Thr-596. Inhibited by hymenialdisine. Specifically inhibited by the H.pylori CagA peptide FPLKRHDKVDDLSK that mimics host substrates and binds to the kinase substrate-binding site. Serine/threonine-protein kinase. Involved in cell polarity and microtubule dynamics regulation. Phosphorylates CRTC2/TORC2, DCX, HDAC7, KIF13B, MAP2, MAP4 and RAB11FIP2. Phosphorylates the microtubule-associated protein MAPT/TAU. Plays a key role in cell polarity by phosphorylating the microtubule-associated proteins MAP2, MAP4 and MAPT/TAU at KXGS motifs, causing detachment from microtubules, and their disassembly. Regulates epithelial cell polarity by phosphorylating RAB11FIP2. Involved in the regulation of neuronal migration through its dual activities in regulating cellular polarity and microtubule dynamics, possibly by phosphorylating and regulating DCX. Regulates axogenesis by phosphorylating KIF13B, promoting interaction between KIF13B and 14-3-3 and inhibiting microtubule-dependent accumulation of KIF13B. Also required for neurite outgrowth and establishment of neuronal polarity. Regulates localization and activity of some histone deacetylases by mediating phosphorylation of HDAC7, promoting subsequent interaction between HDAC7 and 14-3-3 and export from the nucleus. Also acts as a positive regulator of the Wnt signaling pathway, probably by mediating phosphorylation of dishevelled proteins (DVL1, DVL2 and/or DVL3). Modulates the developmental decision to build a columnar versus a hepatic epithelial cell apparently by promoting a switch from a direct to a transcytotic mode of apical protein delivery. Essential for the asymmetric development of membrane domains of polarized epithelial cells. The polypeptide is Serine/threonine-protein kinase MARK2 (Homo sapiens (Human)).